The chain runs to 524 residues: Bifunctional purine biosynthesis protein PurH (524 aa).

An MGS-like domain is found at 1-145 (MIKQALLSVS…KNHRDVTVIV (145 aa)).

It belongs to the PurH family.

It carries out the reaction (6R)-10-formyltetrahydrofolate + 5-amino-1-(5-phospho-beta-D-ribosyl)imidazole-4-carboxamide = 5-formamido-1-(5-phospho-D-ribosyl)imidazole-4-carboxamide + (6S)-5,6,7,8-tetrahydrofolate. It catalyses the reaction IMP + H2O = 5-formamido-1-(5-phospho-D-ribosyl)imidazole-4-carboxamide. It functions in the pathway purine metabolism; IMP biosynthesis via de novo pathway; 5-formamido-1-(5-phospho-D-ribosyl)imidazole-4-carboxamide from 5-amino-1-(5-phospho-D-ribosyl)imidazole-4-carboxamide (10-formyl THF route): step 1/1. The protein operates within purine metabolism; IMP biosynthesis via de novo pathway; IMP from 5-formamido-1-(5-phospho-D-ribosyl)imidazole-4-carboxamide: step 1/1. The sequence is that of Bifunctional purine biosynthesis protein PurH from Cupriavidus taiwanensis (strain DSM 17343 / BCRC 17206 / CCUG 44338 / CIP 107171 / LMG 19424 / R1) (Ralstonia taiwanensis (strain LMG 19424)).